We begin with the raw amino-acid sequence, 213 residues long: Succinate dehydrogenase subunit 3-1, mitochondrial (213 aa).

Residues Met-1–Phe-105 constitute a mitochondrion transit peptide. His-130 lines the heme pocket. The helical transmembrane segment at Ile-148–Leu-165 threads the bilayer.

Component of complex II composed of eight subunits in plants: four classical SDH subunits SDH1, SDH2, SDH3 and SDH4 (a flavoprotein (FP), an iron-sulfur protein (IP), and a cytochrome b composed of a large and a small subunit.), as well as four subunits unknown in mitochondria from bacteria and heterotrophic eukaryotes. It depends on heme as a cofactor. In terms of tissue distribution, expressed in flowers, inflorescences and stems.

The protein resides in the mitochondrion inner membrane. The protein operates within carbohydrate metabolism; tricarboxylic acid cycle. Its function is as follows. Membrane-anchoring subunit of succinate dehydrogenase (SDH). This is Succinate dehydrogenase subunit 3-1, mitochondrial from Arabidopsis thaliana (Mouse-ear cress).